A 203-amino-acid polypeptide reads, in one-letter code: Ribonuclease HII (203 aa).

The 186-residue stretch at 18–203 (GHYAGVDEVG…SFRPVREALA (186 aa)) folds into the RNase H type-2 domain. A divalent metal cation-binding residues include aspartate 24, glutamate 25, and aspartate 116.

This sequence belongs to the RNase HII family. It depends on Mn(2+) as a cofactor. Mg(2+) is required as a cofactor.

It localises to the cytoplasm. The enzyme catalyses Endonucleolytic cleavage to 5'-phosphomonoester.. Its function is as follows. Endonuclease that specifically degrades the RNA of RNA-DNA hybrids. This chain is Ribonuclease HII, found in Shewanella halifaxensis (strain HAW-EB4).